A 383-amino-acid chain; its full sequence is Acetylornithine deacetylase (383 aa).

His-80 contributes to the Zn(2+) binding site. Asp-82 is an active-site residue. Asp-112 contacts Zn(2+). Glu-144 is an active-site residue. Zn(2+) is bound by residues Glu-145, Glu-169, and His-355.

This sequence belongs to the peptidase M20A family. ArgE subfamily. Homodimer. The cofactor is Zn(2+). Co(2+) serves as cofactor. Requires glutathione as cofactor.

It localises to the cytoplasm. It carries out the reaction N(2)-acetyl-L-ornithine + H2O = L-ornithine + acetate. The protein operates within amino-acid biosynthesis; L-arginine biosynthesis; L-ornithine from N(2)-acetyl-L-ornithine (linear): step 1/1. In terms of biological role, catalyzes the hydrolysis of the amide bond of N(2)-acetylated L-amino acids. Cleaves the acetyl group from N-acetyl-L-ornithine to form L-ornithine, an intermediate in L-arginine biosynthesis pathway, and a branchpoint in the synthesis of polyamines. In Shigella flexneri, this protein is Acetylornithine deacetylase.